Here is a 343-residue protein sequence, read N- to C-terminus: Heat-inducible transcription repressor HrcA (343 aa).

This sequence belongs to the HrcA family.

In terms of biological role, negative regulator of class I heat shock genes (grpE-dnaK-dnaJ and groELS operons). Prevents heat-shock induction of these operons. The polypeptide is Heat-inducible transcription repressor HrcA (Alkaliphilus metalliredigens (strain QYMF)).